Consider the following 102-residue polypeptide: NADH-quinone oxidoreductase subunit K (102 aa).

3 helical membrane passes run Ala6–Thr26, Leu31–Phe51, and Val62–Val82.

It belongs to the complex I subunit 4L family. NDH-1 is composed of 14 different subunits. Subunits NuoA, H, J, K, L, M, N constitute the membrane sector of the complex.

The protein resides in the cell membrane. The catalysed reaction is a quinone + NADH + 5 H(+)(in) = a quinol + NAD(+) + 4 H(+)(out). Functionally, NDH-1 shuttles electrons from NADH, via FMN and iron-sulfur (Fe-S) centers, to quinones in the respiratory chain. The immediate electron acceptor for the enzyme in this species is believed to be ubiquinone. Couples the redox reaction to proton translocation (for every two electrons transferred, four hydrogen ions are translocated across the cytoplasmic membrane), and thus conserves the redox energy in a proton gradient. The protein is NADH-quinone oxidoreductase subunit K of Thermomicrobium roseum (strain ATCC 27502 / DSM 5159 / P-2).